A 595-amino-acid polypeptide reads, in one-letter code: Isoprene synthase, chloroplastic (595 aa).

The N-terminal 37 residues, 1–37 (MATELLCLHRPISLTHKLFRNPLPKVIQATPLTLKLR), are a transit peptide targeting the chloroplast. Residue Asp345 participates in dimethylallyl diphosphate binding. Mg(2+) is bound by residues Asp345 and Asp349. Positions 345 to 349 (DDIYD) match the DDXXD motif motif. Positions 423, 486, and 489 each coordinate dimethylallyl diphosphate. Mg(2+)-binding residues include Asn489, Ser493, and Glu497.

The protein belongs to the terpene synthase family. Tpsb subfamily. Requires Mg(2+) as cofactor. Predominantly expressed in leaves.

The protein localises to the plastid. It is found in the chloroplast. It catalyses the reaction dimethylallyl diphosphate = isoprene + diphosphate. The protein operates within terpene metabolism. In terms of biological role, lyase that catalyzes the formation of isoprene from dimethylallyl diphosphate, but not from isopentenyl diphosphate or geranyl diphosphate. The chain is Isoprene synthase, chloroplastic from Populus alba (White poplar).